The sequence spans 205 residues: Recombination protein RecR (205 aa).

The segment at 59 to 74 adopts a C4-type zinc-finger fold; that stretch reads CAMCNTFCEGGLCDIC. A Toprim domain is found at 82–177; sequence RRLMVVHMPA…KVSRLSQGIP (96 aa).

The protein belongs to the RecR family.

Functionally, may play a role in DNA repair. It seems to be involved in an RecBC-independent recombinational process of DNA repair. It may act with RecF and RecO. The sequence is that of Recombination protein RecR from Neisseria meningitidis serogroup C (strain 053442).